We begin with the raw amino-acid sequence, 432 residues long: Adenylosuccinate synthetase (432 aa).

GTP is bound by residues 13–19 (GDEGKGK) and 41–43 (GHT). Catalysis depends on aspartate 14, which acts as the Proton acceptor. Residues aspartate 14 and glycine 41 each coordinate Mg(2+). Residues 14 to 17 (DEGK), 39 to 42 (NAGH), threonine 130, arginine 144, glutamine 225, threonine 240, and arginine 304 each bind IMP. The active-site Proton donor is the histidine 42. 300 to 306 (ATTGRRR) provides a ligand contact to substrate. GTP-binding positions include arginine 306, 332-334 (KLD), and 415-417 (STG).

This sequence belongs to the adenylosuccinate synthetase family. Homodimer. Mg(2+) serves as cofactor.

The protein localises to the cytoplasm. It carries out the reaction IMP + L-aspartate + GTP = N(6)-(1,2-dicarboxyethyl)-AMP + GDP + phosphate + 2 H(+). Its pathway is purine metabolism; AMP biosynthesis via de novo pathway; AMP from IMP: step 1/2. Its function is as follows. Plays an important role in the de novo pathway of purine nucleotide biosynthesis. Catalyzes the first committed step in the biosynthesis of AMP from IMP. This chain is Adenylosuccinate synthetase, found in Klebsiella pneumoniae subsp. pneumoniae (strain ATCC 700721 / MGH 78578).